The primary structure comprises 131 residues: Sec-independent protein translocase protein TatB (131 aa).

The helical transmembrane segment at 2 to 22 (FDGIGFMELLLIGIVGLVVLG) threads the bilayer. Residues 86–95 (LKEAAQSVNR) are compositionally biased toward polar residues. Residues 86-131 (LKEAAQSVNRPYQVEDVPAAKDVPAKEMPTSETSTATNANSDKPNG) are disordered. Positions 115 to 131 (TSETSTATNANSDKPNG) are enriched in low complexity.

Belongs to the TatB family. The Tat system comprises two distinct complexes: a TatABC complex, containing multiple copies of TatA, TatB and TatC subunits, and a separate TatA complex, containing only TatA subunits. Substrates initially bind to the TatABC complex, which probably triggers association of the separate TatA complex to form the active translocon.

The protein localises to the cell inner membrane. In terms of biological role, part of the twin-arginine translocation (Tat) system that transports large folded proteins containing a characteristic twin-arginine motif in their signal peptide across membranes. Together with TatC, TatB is part of a receptor directly interacting with Tat signal peptides. TatB may form an oligomeric binding site that transiently accommodates folded Tat precursor proteins before their translocation. The chain is Sec-independent protein translocase protein TatB from Shewanella halifaxensis (strain HAW-EB4).